The chain runs to 783 residues: Metabotropic glutamate receptor-like protein J (783 aa).

The signal sequence occupies residues 1-20; it reads MKILLYIAIILSFFSLITIS. Residues 21–383 are Extracellular-facing; it reads SECKIAVLLS…DYPNSLKYGV (363 aa). Positions 56-85 form a coiled coil; sequence DFSIYYENLEESMEEAEKAFQDALHKGANL. Asn181, Asn196, Asn256, Asn282, and Asn315 each carry an N-linked (GlcNAc...) asparagine glycan. A helical membrane pass occupies residues 384–404; that stretch reads TIVSGVCIFICLVCMTLVVVF. Topologically, residues 405–415 are cytoplasmic; it reads KKARVIKSSSP. Residues 416 to 436 form a helical membrane-spanning segment; that stretch reads AFLLLILLGCCIIFAACILFA. Over 437–443 the chain is Extracellular; that stretch reads QSPTNQT. N-linked (GlcNAc...) asparagine glycosylation occurs at Asn441. A helical transmembrane segment spans residues 444-464; the sequence is CSARIWLLSLGYTLFLGNLLV. Residues 465 to 489 are Cytoplasmic-facing; sequence KNWRIWLLFDNPKLKKRAITNWKLY. The chain crosses the membrane as a helical span at residues 490–510; it reads PWVFAILAIDVMILAIWQGLG. Residues 511–538 are Extracellular-facing; sequence NINAESRIGYDSLTQYQYKNVCSSDDQG. A helical transmembrane segment spans residues 539 to 559; it reads SIALYLLLVFHGLVLLVACFI. The Cytoplasmic segment spans residues 560–575; it reads SFKIKVVDIEEFNESK. The helical transmembrane segment at 576–596 threads the bilayer; that stretch reads PITTSVYIITFCLFIVIPLMV. Residues 597-604 are Extracellular-facing; sequence SPQSLTSQ. Residues 605–625 traverse the membrane as a helical segment; that stretch reads TTIICVCAIVTTLISMLLLFG. Topologically, residues 626 to 783 are cytoplasmic; the sequence is SKFYKMATQG…GETEIDSNNV (158 aa). Low complexity predominate over residues 647–656; that stretch reads KSSSKSSKSS. Disordered regions lie at residues 647 to 696 and 731 to 783; these read KSSS…FSNK and QLQQ…SNNV. A compositionally biased stretch (acidic residues) spans 670-679; sequence GEDDTSDETS. Residues 763–783 are compositionally biased toward polar residues; that stretch reads VLSKRISNQQNGETEIDSNNV.

The protein in the N-terminal section; belongs to the BMP lipoprotein family. This sequence in the C-terminal section; belongs to the G-protein coupled receptor 3 family. GABA-B receptor subfamily.

Its subcellular location is the cell membrane. The protein localises to the membrane. It localises to the endoplasmic reticulum membrane. It is found in the golgi apparatus membrane. The protein resides in the nucleus envelope. Its function is as follows. May act during the development and be a negative regulator. The polypeptide is Metabotropic glutamate receptor-like protein J (grlJ) (Dictyostelium discoideum (Social amoeba)).